Reading from the N-terminus, the 132-residue chain is Fluoride-specific ion channel FluC 2 (132 aa).

A run of 4 helical transmembrane segments spans residues 5 to 25 (VAVF…NLLG), 34 to 54 (TFIE…FFAA), 59 to 79 (PLVQ…MSAF), and 95 to 115 (VLYL…GIVI). 2 residues coordinate Na(+): glycine 71 and threonine 74.

It belongs to the fluoride channel Fluc/FEX (TC 1.A.43) family.

It localises to the cell membrane. It carries out the reaction fluoride(in) = fluoride(out). Its activity is regulated as follows. Na(+) is not transported, but it plays an essential structural role and its presence is essential for fluoride channel function. Functionally, fluoride-specific ion channel. Important for reducing fluoride concentration in the cell, thus reducing its toxicity. The chain is Fluoride-specific ion channel FluC 2 from Bacillus licheniformis (strain ATCC 14580 / DSM 13 / JCM 2505 / CCUG 7422 / NBRC 12200 / NCIMB 9375 / NCTC 10341 / NRRL NRS-1264 / Gibson 46).